The sequence spans 308 residues: tRNA dimethylallyltransferase (308 aa).

Residue 14–21 participates in ATP binding; sequence GPTASGKT. 16-21 contributes to the substrate binding site; that stretch reads TASGKT. 3 interaction with substrate tRNA regions span residues 39–42, 163–167, and 244–249; these read DSAL, QRLSR, and RCVGYR.

Belongs to the IPP transferase family. Monomer. Requires Mg(2+) as cofactor.

It carries out the reaction adenosine(37) in tRNA + dimethylallyl diphosphate = N(6)-dimethylallyladenosine(37) in tRNA + diphosphate. Catalyzes the transfer of a dimethylallyl group onto the adenine at position 37 in tRNAs that read codons beginning with uridine, leading to the formation of N6-(dimethylallyl)adenosine (i(6)A). The chain is tRNA dimethylallyltransferase from Shewanella oneidensis (strain ATCC 700550 / JCM 31522 / CIP 106686 / LMG 19005 / NCIMB 14063 / MR-1).